An 86-amino-acid chain; its full sequence is Electron transfer flavoprotein regulatory factor 1 (86 aa).

It belongs to the complex I LYR family.

The protein resides in the mitochondrion. Its function is as follows. Acts as a regulator of the electron transfer flavoprotein by promoting the removal of flavin from the ETF holoenzyme (composed of ETFA and ETFB). The protein is Electron transfer flavoprotein regulatory factor 1 of Taeniopygia guttata (Zebra finch).